The following is a 267-amino-acid chain: Digeranylgeranylglyceryl phosphate synthase (267 aa).

7 consecutive transmembrane segments (helical) span residues 10–30 (ANCV…GALL), 33–53 (LHTP…GNAI), 80–100 (AALI…GLIN), 104–121 (LALA…AARL), 139–159 (TFLF…LSIL), 198–218 (VLAS…PLGI), and 247–267 (QRWI…GYHI).

This sequence belongs to the UbiA prenyltransferase family. DGGGP synthase subfamily. It depends on Mg(2+) as a cofactor.

The protein resides in the cell membrane. The catalysed reaction is sn-3-O-(geranylgeranyl)glycerol 1-phosphate + (2E,6E,10E)-geranylgeranyl diphosphate = 2,3-bis-O-(geranylgeranyl)-sn-glycerol 1-phosphate + diphosphate. It participates in membrane lipid metabolism; glycerophospholipid metabolism. Prenyltransferase that catalyzes the transfer of the geranylgeranyl moiety of geranylgeranyl diphosphate (GGPP) to the C2 hydroxyl of (S)-3-O-geranylgeranylglyceryl phosphate (GGGP). This reaction is the second ether-bond-formation step in the biosynthesis of archaeal membrane lipids. This is Digeranylgeranylglyceryl phosphate synthase from Methanothrix thermoacetophila (strain DSM 6194 / JCM 14653 / NBRC 101360 / PT) (Methanosaeta thermophila).